The chain runs to 345 residues: Phosphate acyltransferase (345 aa).

It belongs to the PlsX family. As to quaternary structure, homodimer. Probably interacts with PlsY.

It is found in the cytoplasm. It carries out the reaction a fatty acyl-[ACP] + phosphate = an acyl phosphate + holo-[ACP]. It participates in lipid metabolism; phospholipid metabolism. In terms of biological role, catalyzes the reversible formation of acyl-phosphate (acyl-PO(4)) from acyl-[acyl-carrier-protein] (acyl-ACP). This enzyme utilizes acyl-ACP as fatty acyl donor, but not acyl-CoA. The chain is Phosphate acyltransferase from Dichelobacter nodosus (strain VCS1703A).